Reading from the N-terminus, the 249-residue chain is MIVKYGGNAMKSVELRRAVAGEIAALRAEQPVVVVHGGGPVIERELAARGIASEFSNGLRVTSPQAMAVVEMALAQLNKQLSQDIGAAVGLLGRDSELLVAEVLDPALGRVGRVTRVNAGLLRTLLGVGLTPVVGCVAVGPDGDALNVNADTAAGAVAGALGEGIVFLTDVDGIYRAYPDPESLASQLPRAEVEAGIRDGWIAGGMIPKVRAALEALDAGAPFAVIASGMQPGVLAAAARGEAGTRLTP.

Substrate-binding positions include 38–39 (GG), Arg-60, and Asn-147.

This sequence belongs to the acetylglutamate kinase family. ArgB subfamily.

Its subcellular location is the cytoplasm. The enzyme catalyses N-acetyl-L-glutamate + ATP = N-acetyl-L-glutamyl 5-phosphate + ADP. It functions in the pathway amino-acid biosynthesis; L-arginine biosynthesis; N(2)-acetyl-L-ornithine from L-glutamate: step 2/4. In terms of biological role, catalyzes the ATP-dependent phosphorylation of N-acetyl-L-glutamate. The protein is Acetylglutamate kinase of Deinococcus geothermalis (strain DSM 11300 / CIP 105573 / AG-3a).